A 131-amino-acid polypeptide reads, in one-letter code: Glycine cleavage system H protein (131 aa).

In terms of domain architecture, Lipoyl-binding spans 24-106 (RVTVGISDHA…YGEGWIFVVE (83 aa)). N6-lipoyllysine is present on Lys65.

Belongs to the GcvH family. The glycine cleavage system is composed of four proteins: P, T, L and H. It depends on (R)-lipoate as a cofactor.

Its function is as follows. The glycine cleavage system catalyzes the degradation of glycine. The H protein shuttles the methylamine group of glycine from the P protein to the T protein. This chain is Glycine cleavage system H protein, found in Xanthomonas axonopodis pv. citri (strain 306).